A 159-amino-acid chain; its full sequence is uncharacterized protein (159 aa).

A signal peptide spans 1–20; the sequence is MKKIIAMSLLMFSVVMSVNA.

This is an uncharacterized protein from Pasteurella multocida (strain Pm70).